The chain runs to 236 residues: 2-C-methyl-D-erythritol 4-phosphate cytidylyltransferase (236 aa).

The protein belongs to the IspD/TarI cytidylyltransferase family. IspD subfamily. In terms of assembly, homodimer.

It catalyses the reaction 2-C-methyl-D-erythritol 4-phosphate + CTP + H(+) = 4-CDP-2-C-methyl-D-erythritol + diphosphate. The protein operates within isoprenoid biosynthesis; isopentenyl diphosphate biosynthesis via DXP pathway; isopentenyl diphosphate from 1-deoxy-D-xylulose 5-phosphate: step 2/6. In terms of biological role, catalyzes the formation of 4-diphosphocytidyl-2-C-methyl-D-erythritol from CTP and 2-C-methyl-D-erythritol 4-phosphate (MEP). The chain is 2-C-methyl-D-erythritol 4-phosphate cytidylyltransferase from Escherichia coli O139:H28 (strain E24377A / ETEC).